A 634-amino-acid chain; its full sequence is uncharacterized protein (634 aa).

Residues 1–40 (MWLQQRLKGLPGLLSSSWARRLLCLLGLLLLLLWFGGSGA) form the signal peptide. Residues 41-589 (RRAAGGLHLL…DEHMAQQDPG (549 aa)) are Extracellular-facing. An N-linked (GlcNAc...) asparagine glycan is attached at Asn363. The helical transmembrane segment at 590–610 (LPFLFWFSVASLITLFHLFLF) threads the bilayer. The Cytoplasmic portion of the chain corresponds to 611–634 (KLIYNEYCGPGAKPLFRSKEDPSV).

The protein localises to the membrane. This is an uncharacterized protein from Homo sapiens (Human).